We begin with the raw amino-acid sequence, 595 residues long: Wee1-like protein kinase 1-B (595 aa).

The segment covering 1 to 17 (MNVQPRNMNVQPRNMNV) has biased composition (polar residues). A disordered region spans residues 1-127 (MNVQPRNMNV…CPGTPPHKTF (127 aa)). Residues 111 to 122 (PTSPIPECPGTP) are compositionally biased toward pro residues. Threonine 186 carries the post-translational modification Phosphothreonine; by cdk1. In terms of domain architecture, Protein kinase spans 248 to 518 (FHELEKIGSG…SVALVKHSVL (271 aa)). ATP contacts are provided by residues 254-262 (IGSGEFGSV) and lysine 277. Residue aspartate 375 is the Proton acceptor of the active site. Mg(2+)-binding residues include asparagine 380 and aspartate 412. Positions 526–563 (AEQLRIELDAEKFKNALLQKELKKAQIAKAAAEERAHF) form a coiled coil.

Belongs to the protein kinase superfamily. Ser/Thr protein kinase family. WEE1 subfamily. Interacts (when phosphorylated at Thr-186) with pin1. Phosphorylation at Thr-186 during M-phase by cdk1 inhibits the kinase activity and leads to interaction with pin1. As to expression, zygotically expressed. Present in oocytes and postgastrula embryos (at least until the tailbud stage). Expression begins at the midblastula stage and increases after the early gastrula stage.

It is found in the nucleus. It carries out the reaction L-tyrosyl-[protein] + ATP = O-phospho-L-tyrosyl-[protein] + ADP + H(+). Functionally, acts as a zygotic negative regulator of entry into mitosis (G2 to M transition) by protecting the nucleus from cytoplasmically activated cyclin B1-complexed cdk1 before the onset of mitosis by mediating phosphorylation of cdk1 on 'Tyr-15'. Specifically phosphorylates and inactivates cyclin B1-complexed cdk1 reaching a maximum during G2 phase and a minimum as cells enter M phase. Phosphorylation of cyclin B1-cdk1 occurs exclusively on 'Tyr-15' and phosphorylation of monomeric cdk1 does not occur. The sequence is that of Wee1-like protein kinase 1-B (wee1-b) from Xenopus laevis (African clawed frog).